Here is a 96-residue protein sequence, read N- to C-terminus: Large ribosomal subunit protein uL23 (96 aa).

This sequence belongs to the universal ribosomal protein uL23 family. Part of the 50S ribosomal subunit. Contacts protein L29, and trigger factor when it is bound to the ribosome.

One of the early assembly proteins it binds 23S rRNA. One of the proteins that surrounds the polypeptide exit tunnel on the outside of the ribosome. Forms the main docking site for trigger factor binding to the ribosome. The sequence is that of Large ribosomal subunit protein uL23 from Oleidesulfovibrio alaskensis (strain ATCC BAA-1058 / DSM 17464 / G20) (Desulfovibrio alaskensis).